The primary structure comprises 213 residues: Ribosomal RNA small subunit methyltransferase G (213 aa).

Residues glycine 83, leucine 88, 132-133 (IE), and arginine 146 each bind S-adenosyl-L-methionine.

The protein belongs to the methyltransferase superfamily. RNA methyltransferase RsmG family.

It localises to the cytoplasm. The catalysed reaction is guanosine(527) in 16S rRNA + S-adenosyl-L-methionine = N(7)-methylguanosine(527) in 16S rRNA + S-adenosyl-L-homocysteine. Specifically methylates the N7 position of guanine in position 527 of 16S rRNA. In Granulibacter bethesdensis (strain ATCC BAA-1260 / CGDNIH1), this protein is Ribosomal RNA small subunit methyltransferase G.